The following is a 156-amino-acid chain: Large ribosomal subunit protein uL22c (156 aa).

It belongs to the universal ribosomal protein uL22 family. Part of the 50S ribosomal subunit.

The protein resides in the plastid. The protein localises to the chloroplast. This protein binds specifically to 23S rRNA. Functionally, the globular domain of the protein is located near the polypeptide exit tunnel on the outside of the subunit, while an extended beta-hairpin is found that lines the wall of the exit tunnel in the center of the 70S ribosome. The chain is Large ribosomal subunit protein uL22c (rpl22) from Buxus microphylla (Littleleaf boxwood).